The sequence spans 156 residues: Small ribosomal subunit protein uS7 (156 aa).

Belongs to the universal ribosomal protein uS7 family. Part of the 30S ribosomal subunit. Contacts proteins S9 and S11.

One of the primary rRNA binding proteins, it binds directly to 16S rRNA where it nucleates assembly of the head domain of the 30S subunit. Is located at the subunit interface close to the decoding center, probably blocks exit of the E-site tRNA. In Prochlorococcus marinus (strain MIT 9301), this protein is Small ribosomal subunit protein uS7.